A 342-amino-acid polypeptide reads, in one-letter code: 4-hydroxy-2-oxovalerate aldolase (342 aa).

One can recognise a Pyruvate carboxyltransferase domain in the interval 7-259; it reads ILVHDMSLRD…CTGVDLGRIQ (253 aa). Residue 15–16 participates in substrate binding; it reads RD. Aspartate 16 is a Mn(2+) binding site. Residue histidine 19 is the Proton acceptor of the active site. Serine 169 and histidine 198 together coordinate substrate. Mn(2+)-binding residues include histidine 198 and histidine 200. Tyrosine 289 is a binding site for substrate.

This sequence belongs to the 4-hydroxy-2-oxovalerate aldolase family.

The catalysed reaction is (S)-4-hydroxy-2-oxopentanoate = acetaldehyde + pyruvate. The chain is 4-hydroxy-2-oxovalerate aldolase from Alkalilimnicola ehrlichii (strain ATCC BAA-1101 / DSM 17681 / MLHE-1).